Reading from the N-terminus, the 62-residue chain is Sperm protamine P1 (62 aa).

A disordered region spans residues 1–62; that stretch reads MARYRHSRSR…RYSRRRRRRY (62 aa).

It belongs to the protamine P1 family. In terms of tissue distribution, testis.

The protein localises to the nucleus. It localises to the chromosome. Its function is as follows. Protamines substitute for histones in the chromatin of sperm during the haploid phase of spermatogenesis. They compact sperm DNA into a highly condensed, stable and inactive complex. The protein is Sperm protamine P1 (PRM1) of Lagostrophus fasciatus (Banded hare-wallaby).